Consider the following 92-residue polypeptide: Small ribosomal subunit protein uS19c (92 aa).

The protein belongs to the universal ribosomal protein uS19 family.

It is found in the plastid. It localises to the chloroplast. Protein S19 forms a complex with S13 that binds strongly to the 16S ribosomal RNA. The protein is Small ribosomal subunit protein uS19c of Amborella trichopoda.